The following is a 745-amino-acid chain: Isocitrate dehydrogenase [NADP] 2 (745 aa).

NADP(+) contacts are provided by Asn87 and Ser89. D-threo-isocitrate-binding residues include Ser134, Asn137, Arg141, Arg147, and Lys257. Asp352 contacts Mg(2+). The D-threo-isocitrate site is built by Tyr422 and Arg550. Mg(2+) contacts are provided by Asp551 and Asp555. 7 residues coordinate NADP(+): Gly587, Ser588, Ala589, His592, Arg603, Asp605, and Arg652.

The protein belongs to the monomeric-type IDH family. As to quaternary structure, may form homotrimers. Also forms homotetramers at low salt concentration, which are dissociated into homodimers, but not into monomers, at high salt concentration (1 M). It depends on Mg(2+) as a cofactor.

The catalysed reaction is D-threo-isocitrate + NADP(+) = 2-oxoglutarate + CO2 + NADPH. In terms of biological role, catalyzes the oxidative decarboxylation of isocitrate to 2-oxoglutarate and carbon dioxide with the concomitant reduction of NADP(+). Cannot use NAD(+). The chain is Isocitrate dehydrogenase [NADP] 2 from Mycobacterium tuberculosis (strain ATCC 25618 / H37Rv).